A 62-amino-acid polypeptide reads, in one-letter code: Beta-defensin 133 (62 aa).

Residues 1–21 (MKIHIFLFVLFFFLVPIATRG) form the signal peptide. Disulfide bonds link cysteine 32-cysteine 60 and cysteine 39-cysteine 53.

It belongs to the beta-defensin family.

The protein resides in the secreted. Its function is as follows. Has antibacterial activity. This is Beta-defensin 133 (DEFB133) from Pan troglodytes (Chimpanzee).